A 172-amino-acid polypeptide reads, in one-letter code: Histone H2A.Z-specific chaperone CHZ1 (172 aa).

2 stretches are compositionally biased toward basic and acidic residues: residues 1-10 (MAEEIKDKQE) and 54-68 (NYDD…EDKA). Residues 1–172 (MAEEIKDKQE…PAPASPTEPK (172 aa)) form a disordered region. Composition is skewed to acidic residues over residues 78-88 (EDSESEVDDEK) and 96-105 (EDEEEDDLSE). A compositionally biased stretch (basic and acidic residues) spans 121 to 139 (KIIDYKKTAEKLEKNGEVG). Residues 140–155 (KDDDDDEDDEENDEEF) are compositionally biased toward acidic residues. Residues 160-172 (APAPAPASPTEPK) are compositionally biased toward pro residues.

The protein belongs to the CHZ1 family. In terms of assembly, forms a heterotrimer with H2A.Z-H2B, stabilizing the association of the histone dimer. Also, with a lower affinity, forms a heterotrimer with H2A-H2B.

The protein localises to the nucleus. Its function is as follows. Forms a chaperone-bound H2A.Z-H2B complex that acts as a source for SWR1 complex-dependent H2A to H2A.Z histone replacement in chromatin. This chain is Histone H2A.Z-specific chaperone CHZ1 (CHZ1), found in Kluyveromyces lactis (strain ATCC 8585 / CBS 2359 / DSM 70799 / NBRC 1267 / NRRL Y-1140 / WM37) (Yeast).